Here is a 186-residue protein sequence, read N- to C-terminus: Mediator of RNA polymerase II transcription subunit 29 (186 aa).

Positions M1–Q12 are enriched in polar residues. Positions M1–Q41 are disordered. Over residues G25 to Q41 the composition is skewed to low complexity.

It belongs to the Mediator complex subunit 29 family. Component of the Mediator complex.

It localises to the nucleus. Its function is as follows. Component of the Mediator complex, a coactivator involved in the regulated transcription of nearly all RNA polymerase II-dependent genes. Mediator functions as a bridge to convey information from gene-specific regulatory proteins to the basal RNA polymerase II transcription machinery. Mediator is recruited to promoters by direct interactions with regulatory proteins and serves as a scaffold for the assembly of a functional preinitiation complex with RNA polymerase II and the general transcription factors. This Xenopus laevis (African clawed frog) protein is Mediator of RNA polymerase II transcription subunit 29 (med29).